Consider the following 264-residue polypeptide: Probable BRI1 kinase inhibitor 1 (264 aa).

Disordered regions lie at residues 1 to 146 and 165 to 240; these read MTMN…GLDV and FSRH…SEES. Over residues 9–30 the composition is skewed to pro residues; that stretch reads RSQPPPPHPPLFKPTTPPPPPL. A compositionally biased stretch (low complexity) spans 31–40; that stretch reads LSTSTSTSPP. Residues 77-97 show a composition bias toward polar residues; the sequence is LSHNNYSSKANQHRQTGSSSS. The segment covering 98–107 has biased composition (basic and acidic residues); the sequence is SKEKDREYKA. Composition is skewed to low complexity over residues 208 to 219 and 227 to 239; these read LSSAPASLRASP and VGGSVKVSTSSEE.

In terms of assembly, interacts with BRI1. In terms of processing, phosphorylated by BRI1.

Its function is as follows. Negative regulator of brassinosteroid signaling. The chain is Probable BRI1 kinase inhibitor 1 (BKI1) from Oryza sativa subsp. japonica (Rice).